Consider the following 204-residue polypeptide: Photosynthetic NDH subunit of subcomplex B 3, chloroplastic (204 aa).

2 disordered regions span residues 1-24 and 45-68; these read MGSVQLSGSGLVASLPPNHSFSHK and KTVRAISTAPASQPPAADEPDEPP. Residues 1–48 constitute a chloroplast transit peptide; that stretch reads MGSVQLSGSGLVASLPPNHSFSHKTKLNKPNSYFFRSKHNAARTKTVR. In terms of domain architecture, 2Fe-2S ferredoxin-type spans 76-180; the sequence is HSVLLPDGTP…STGLVVIQQL (105 aa). Positions 120, 126, 129, and 162 each coordinate [2Fe-2S] cluster.

As to quaternary structure, part of the chloroplast NDH complex, composed of a mixture of chloroplast and nucleus encoded subunits. Component of the NDH subcomplex B, at least composed of PnsB1, PnsB2, PnsB3, PnsB4 and PnsB5.

It localises to the plastid. Its subcellular location is the chloroplast thylakoid membrane. Functionally, NDH shuttles electrons from NAD(P)H:plastoquinone, via FMN and iron-sulfur (Fe-S) centers, to quinones in the photosynthetic chain and possibly in a chloroplast respiratory chain. The immediate electron acceptor for the enzyme in this species is believed to be plastoquinone. Couples the redox reaction to proton translocation, and thus conserves the redox energy in a proton gradient. This Arabidopsis thaliana (Mouse-ear cress) protein is Photosynthetic NDH subunit of subcomplex B 3, chloroplastic.